The sequence spans 149 residues: UPF0260 protein PSPTO_3918 (149 aa).

The protein belongs to the UPF0260 family.

In Pseudomonas syringae pv. tomato (strain ATCC BAA-871 / DC3000), this protein is UPF0260 protein PSPTO_3918.